We begin with the raw amino-acid sequence, 176 residues long: Crossover junction endodeoxyribonuclease RuvC (176 aa).

Active-site residues include Asp-9, Glu-69, and Asp-141. Mg(2+) contacts are provided by Asp-9, Glu-69, and Asp-141.

Belongs to the RuvC family. In terms of assembly, homodimer which binds Holliday junction (HJ) DNA. The HJ becomes 2-fold symmetrical on binding to RuvC with unstacked arms; it has a different conformation from HJ DNA in complex with RuvA. In the full resolvosome a probable DNA-RuvA(4)-RuvB(12)-RuvC(2) complex forms which resolves the HJ. Mg(2+) serves as cofactor.

It is found in the cytoplasm. The catalysed reaction is Endonucleolytic cleavage at a junction such as a reciprocal single-stranded crossover between two homologous DNA duplexes (Holliday junction).. In terms of biological role, the RuvA-RuvB-RuvC complex processes Holliday junction (HJ) DNA during genetic recombination and DNA repair. Endonuclease that resolves HJ intermediates. Cleaves cruciform DNA by making single-stranded nicks across the HJ at symmetrical positions within the homologous arms, yielding a 5'-phosphate and a 3'-hydroxyl group; requires a central core of homology in the junction. The consensus cleavage sequence is 5'-(A/T)TT(C/G)-3'. Cleavage occurs on the 3'-side of the TT dinucleotide at the point of strand exchange. HJ branch migration catalyzed by RuvA-RuvB allows RuvC to scan DNA until it finds its consensus sequence, where it cleaves and resolves the cruciform DNA. This Chromobacterium violaceum (strain ATCC 12472 / DSM 30191 / JCM 1249 / CCUG 213 / NBRC 12614 / NCIMB 9131 / NCTC 9757 / MK) protein is Crossover junction endodeoxyribonuclease RuvC.